Consider the following 604-residue polypeptide: Elongation factor 4 (604 aa).

The tr-type G domain occupies 7–189 (SKIRNFCIIA…SIVHLVPPPS (183 aa)). Residues 19–24 (DHGKST) and 136–139 (NKID) each bind GTP.

Belongs to the TRAFAC class translation factor GTPase superfamily. Classic translation factor GTPase family. LepA subfamily.

The protein localises to the cell inner membrane. It carries out the reaction GTP + H2O = GDP + phosphate + H(+). Its function is as follows. Required for accurate and efficient protein synthesis under certain stress conditions. May act as a fidelity factor of the translation reaction, by catalyzing a one-codon backward translocation of tRNAs on improperly translocated ribosomes. Back-translocation proceeds from a post-translocation (POST) complex to a pre-translocation (PRE) complex, thus giving elongation factor G a second chance to translocate the tRNAs correctly. Binds to ribosomes in a GTP-dependent manner. In Synechococcus elongatus (strain ATCC 33912 / PCC 7942 / FACHB-805) (Anacystis nidulans R2), this protein is Elongation factor 4.